The sequence spans 570 residues: Interleukin-1 receptor accessory protein (570 aa).

The signal sequence occupies residues 1–20 (MTLLWCVVSLYFYGILQSDA). 3 Ig-like C2-type domains span residues 21–128 (SERC…VAFP), 141–230 (PMKL…RTLT), and 242–348 (PPVI…AKVK). Residues 21–367 (SERCDDWGLD…VELACGFGAT (347 aa)) are Extracellular-facing. Disulfide bonds link Cys-24–Cys-122, Cys-47–Cys-114, Cys-137–Cys-181, Cys-160–Cys-212, and Cys-266–Cys-332. Residue Asn-57 is glycosylated (N-linked (GlcNAc...) asparagine). Residues 69–85 (IWYWTRQDRDLEEPINF) form an essential for interaction with PTPRD region. N-linked (GlcNAc...) asparagine glycans are attached at residues Asn-107, Asn-111, and Asn-118. 3 N-linked (GlcNAc...) asparagine glycosylation sites follow: Asn-196, Asn-209, and Asn-299. A helical membrane pass occupies residues 368 to 388 (VLLVVILIVVYHVYWLEMVLF). Residues 389–570 (YRAHFGTDET…GLSYSSLKNV (182 aa)) are Cytoplasmic-facing. Residues 403–546 (KEYDIYVSYA…RFWKQLQVAM (144 aa)) enclose the TIR domain. The active site involves Glu-482. Positions 549–570 (KKSPRRSSSDEQGLSYSSLKNV) are disordered. Position 557 is a phosphoserine (Ser-557). The segment covering 558–570 (DEQGLSYSSLKNV) has biased composition (polar residues).

The protein belongs to the interleukin-1 receptor family. As to quaternary structure, the interleukin-36 receptor complex is a heterodimer of IL1RL2 and IL1RAP; the association is inhibited by IL36RN. The interleukin-1 receptor complex is a heterodimer of IL1R1 and IL1RAP. Associates with IL1R2 to form a non-signaling interleukin-1 receptor complex. Isoform 4 interacts with IL1R1 in an interleukin-1-dependent manner. Interacts with IL-33-bound IL1RL1 to form the minimal interleukin-33 signaling complex with a 1:1:1 stoichiometry. Interacts with KIT (independently of stimulation with KITLG/SCF). A mast cell-specific KITLG/SCF-induced interleukin-33 signaling complex contains IL1RL1, IL1RAP, KIT and MYD88. Interacts (via the first immunoglobilin domain) with PTPRD (via the third immunoglobilin domain); induces pre- and postsynaptic differentiation of neurons. In terms of tissue distribution, detected in liver, skin, placenta, thymus and lung. Isoform 4 is predominantly expressed in brain. Overexpressed on candidate chronic myeloid leukemia (CML) stem cells, hematopoietic stem cells and mononuclear cells of patients with acute myeloid leukemia (AML). Overexpressed in patients with chronic obstructive pulmonary disease (COPD). Expressed in T-helper 1 (Th1) and T-helper 2 (Th2) cell subsets.

Its subcellular location is the cell membrane. It is found in the secreted. The catalysed reaction is NAD(+) + H2O = ADP-D-ribose + nicotinamide + H(+). In terms of biological role, coreceptor for IL1RL2 in the IL-36 signaling system. Coreceptor with IL1R1 in the IL-1 signaling system. Associates with IL1R1 bound to IL1B to form the high affinity interleukin-1 receptor complex which mediates interleukin-1-dependent activation of NF-kappa-B and other pathways. Signaling involves the recruitment of adapter molecules such as TOLLIP, MYD88, and IRAK1 or IRAK2 via the respective TIR domains of the receptor/coreceptor subunits. Recruits TOLLIP to the signaling complex. Does not bind to interleukin-1 alone; binding of IL1RN to IL1R1, prevents its association with IL1R1 to form a signaling complex. The cellular response is modulated through a non-signaling association with the membrane IL1R2 decoy receptor. Coreceptor for IL1RL1 in the IL-33 signaling system. Can bidirectionally induce pre- and postsynaptic differentiation of neurons by trans-synaptically binding to PTPRD. May play a role in IL1B-mediated costimulation of IFNG production from T-helper 1 (Th1) cells. Its function is as follows. Associates with secreted ligand-bound IL1R2 and increases the affinity of secreted IL1R2 for IL1B; this complex formation may be the dominant mechanism for neutralization of IL1B by secreted/soluble receptors. Enhances the ability of secreted IL1R1 to inhibit IL-33 signaling. Unable to mediate canonical IL-1 signaling. Required for Src phosphorylation by IL1B. May be involved in IL1B-potentiated NMDA-induced calcium influx in neurons. The sequence is that of Interleukin-1 receptor accessory protein (IL1RAP) from Homo sapiens (Human).